Here is a 479-residue protein sequence, read N- to C-terminus: FAD-dependent monooxygenase ausM (479 aa).

Glu-40, Gly-54, and Arg-113 together coordinate FAD. The active site involves Tyr-224. N-linked (GlcNAc...) asparagine glycosylation occurs at Asn-289. Asp-316 and Ala-329 together coordinate FAD. The chain crosses the membrane as a helical span at residues 449–469 (TLPWLVISLPVLASMLCYLVY).

This sequence belongs to the paxM FAD-dependent monooxygenase family. Requires FAD as cofactor.

The protein resides in the membrane. It functions in the pathway secondary metabolite biosynthesis; terpenoid biosynthesis. FAD-dependent monooxygenase; part of the gene cluster B that mediates the biosynthesis of austinol and dehydroaustinol, two fungal meroterpenoids. The first step of the pathway is the synthesis of 3,5-dimethylorsellinic acid by the polyketide synthase ausA. 3,5-dimethylorsellinic acid is then prenylated by the polyprenyl transferase ausN. Further epoxidation by the FAD-dependent monooxygenase ausM and cyclization by the probable terpene cyclase ausL lead to the formation of protoaustinoid A. Protoaustinoid A is then oxidized to spiro-lactone preaustinoid A3 by the combined action of the FAD-binding monooxygenases ausB and ausC, and the dioxygenase ausE. Acid-catalyzed keto-rearrangement and ring contraction of the tetraketide portion of preaustinoid A3 by ausJ lead to the formation of preaustinoid A4. The aldo-keto reductase ausK, with the help of ausH, is involved in the next step by transforming preaustinoid A4 into isoaustinone which is in turn hydroxylated by the P450 monooxygenase ausI to form austinolide. Finally, the cytochrome P450 monooxygenase ausG modifies austinolide to austinol. Austinol can be further modified to dehydroaustinol which forms a diffusible complex with diorcinol that initiates conidiation. Due to genetic rearrangements of the clusters and the subsequent loss of some enzymes, the end products of the Emericella nidulans austinoid biosynthesis clusters are austinol and dehydroaustinol, even if additional enzymes, such as the O-acetyltransferase ausQ and the cytochrome P450 monooxygenase ausR are still functional. This is FAD-dependent monooxygenase ausM from Emericella nidulans (strain FGSC A4 / ATCC 38163 / CBS 112.46 / NRRL 194 / M139) (Aspergillus nidulans).